A 457-amino-acid chain; its full sequence is Fibrinogen C domain-containing protein 1 (457 aa).

The segment at 1–20 (MGSDRWKNIGGAPQMEDSVQ) is disordered. At 1–33 (MGSDRWKNIGGAPQMEDSVQDKSQRKGCGYILC) the chain is on the cytoplasmic side. The chain crosses the membrane as a helical; Signal-anchor for type II membrane protein span at residues 34–54 (TVLLSVAVLLAVTVTGAVLFM). Over 55-457 (NHYHAPSTEP…MKIRPQREEN (403 aa)) the chain is Extracellular. Residues 211-235 (RPRVKADLQRAPSRSSRPRGCANGS) form a disordered region. The Fibrinogen C-terminal domain occupies 231–454 (CANGSKPRDC…FTEMKIRPQR (224 aa)). Asn-233 is a glycosylation site (N-linked (GlcNAc...) asparagine). Residues Cys-240 and Cys-269 are joined by a disulfide bond. The N-linked (GlcNAc...) asparagine glycan is linked to Asn-336. The Ca(2+) site is built by Asp-389 and Asp-391. Cys-397 and Cys-410 are disulfide-bonded.

Homotetramer; disulfide-linked.

It is found in the membrane. Functionally, acetyl group-binding receptor which shows a calcium-dependent binding to acetylated structures such as chitin, some N-acetylated carbohydrates, and amino acids. The polypeptide is Fibrinogen C domain-containing protein 1 (fibcd1) (Xenopus tropicalis (Western clawed frog)).